The following is an 821-amino-acid chain: Probable E3 ubiquitin-protein ligase hulA (821 aa).

Residues 1–112 (MGSNLPAQPN…QMGGDEMLTR (112 aa)) enclose the C2 domain. 2 disordered regions span residues 140-240 (PNQA…WERR) and 255-359 (RTTT…YFVD). Polar residues-rich tracts occupy residues 151–173 (AQSSTSSGLVPQVSSASHPSVSP), 181–201 (AASNVSLHPQRVPSTTRPTST), 217–228 (QGSRTNLSSFED), and 255–272 (RTTTWTRPSSNYNEQTQR). In terms of domain architecture, WW 1 spans 231–264 (GRLPAGWERREDNLGRTYYVDHNTRTTTWTRPSS). The span at 281 to 296 (LERRAHQSRMLPEDRT) shows a compositional bias: basic and acidic residues. Over residues 297–306 (GANSPNLQES) the composition is skewed to polar residues. Over residues 311–339 (PQQAHTPPAGGSASAVSMMATGATTAGTG) the composition is skewed to low complexity. 2 consecutive WW domains span residues 339-372 (GELPPGWEQRTTPEGRPYFVDHNTRTTTWVDPRR) and 399-432 (GPLPSGWEMRLTNTARVYFVDHNTKTTTWDDPRL). Residues 488–821 (SASDLKKRLM…VEETLGFGQE (334 aa)) form the HECT domain. Cysteine 789 serves as the catalytic Glycyl thioester intermediate.

This sequence belongs to the RSP5/NEDD4 family. As to quaternary structure, interacts with creD.

It is found in the cytoplasm. It carries out the reaction S-ubiquitinyl-[E2 ubiquitin-conjugating enzyme]-L-cysteine + [acceptor protein]-L-lysine = [E2 ubiquitin-conjugating enzyme]-L-cysteine + N(6)-ubiquitinyl-[acceptor protein]-L-lysine.. The protein operates within protein modification; protein ubiquitination. Functionally, E3 ubiquitin-protein ligase which accepts ubiquitin from an E2 ubiquitin-conjugating enzyme in the form of a thioester and then directly transfers the ubiquitin to targeted substrates. Probably involved in the regulatory network controlling carbon source utilization. The sequence is that of Probable E3 ubiquitin-protein ligase hulA (hulA) from Aspergillus niger (strain ATCC MYA-4892 / CBS 513.88 / FGSC A1513).